A 276-amino-acid polypeptide reads, in one-letter code: Large ribosomal subunit protein uL2 (276 aa).

Disordered stretches follow at residues 1-58 (MAIR…GGGH) and 218-276 (RPIT…KNRK). Residues 16-27 (ASVSDFSDLTRS) are compositionally biased toward polar residues. Residues 255-276 (RRPKKASNKMIVRRRPNGKNRK) show a composition bias toward basic residues.

The protein belongs to the universal ribosomal protein uL2 family. In terms of assembly, part of the 50S ribosomal subunit. Forms a bridge to the 30S subunit in the 70S ribosome.

In terms of biological role, one of the primary rRNA binding proteins. Required for association of the 30S and 50S subunits to form the 70S ribosome, for tRNA binding and peptide bond formation. It has been suggested to have peptidyltransferase activity; this is somewhat controversial. Makes several contacts with the 16S rRNA in the 70S ribosome. The protein is Large ribosomal subunit protein uL2 of Bifidobacterium animalis subsp. lactis (strain AD011).